A 487-amino-acid polypeptide reads, in one-letter code: UDP-N-acetylmuramoyl-L-alanyl-D-glutamate--2,6-diaminopimelate ligase (487 aa).

Positions 23 and 25 each coordinate UDP-N-acetyl-alpha-D-muramoyl-L-alanyl-D-glutamate. 108–114 (GTNGKTS) is an ATP binding site. UDP-N-acetyl-alpha-D-muramoyl-L-alanyl-D-glutamate contacts are provided by residues 150 to 151 (TT), Ser-177, Gln-183, and Arg-185. Lys-217 is modified (N6-carboxylysine). Residues Arg-378, 402 to 405 (DNPR), Gly-453, and Glu-457 each bind meso-2,6-diaminopimelate. A Meso-diaminopimelate recognition motif motif is present at residues 402–405 (DNPR).

This sequence belongs to the MurCDEF family. MurE subfamily. Mg(2+) is required as a cofactor. Carboxylation is probably crucial for Mg(2+) binding and, consequently, for the gamma-phosphate positioning of ATP.

The protein localises to the cytoplasm. The enzyme catalyses UDP-N-acetyl-alpha-D-muramoyl-L-alanyl-D-glutamate + meso-2,6-diaminopimelate + ATP = UDP-N-acetyl-alpha-D-muramoyl-L-alanyl-gamma-D-glutamyl-meso-2,6-diaminopimelate + ADP + phosphate + H(+). It functions in the pathway cell wall biogenesis; peptidoglycan biosynthesis. Functionally, catalyzes the addition of meso-diaminopimelic acid to the nucleotide precursor UDP-N-acetylmuramoyl-L-alanyl-D-glutamate (UMAG) in the biosynthesis of bacterial cell-wall peptidoglycan. The chain is UDP-N-acetylmuramoyl-L-alanyl-D-glutamate--2,6-diaminopimelate ligase from Ectopseudomonas mendocina (strain ymp) (Pseudomonas mendocina).